A 369-amino-acid polypeptide reads, in one-letter code: DNA replication and repair protein RecF (369 aa).

30–37 is an ATP binding site; it reads GRNAQGKT.

It belongs to the RecF family.

The protein resides in the cytoplasm. The RecF protein is involved in DNA metabolism; it is required for DNA replication and normal SOS inducibility. RecF binds preferentially to single-stranded, linear DNA. It also seems to bind ATP. This is DNA replication and repair protein RecF from Streptococcus agalactiae serotype Ia (strain ATCC 27591 / A909 / CDC SS700).